Here is a 1365-residue protein sequence, read N- to C-terminus: Patatin-like phospholipase domain-containing protein 6 (1365 aa).

Residues 1–50 lie on the Lumenal side of the membrane; it reads MGTSSHGLATNSSGAKVAERDGFQDVPAPGEGAAGRICGAQPVPFVPQVL. Residue N11 is glycosylated (N-linked (GlcNAc...) asparagine). A helical membrane pass occupies residues 51–71; the sequence is GVMIGAGVAVVVTAVLILLVV. At 72–1365 the chain is on the cytoplasmic side; that stretch reads RRLRVPKTPA…QEPPGSATDA (1294 aa). 186 to 313 provides a ligand contact to a nucleoside 3',5'-cyclic phosphate; that stretch reads VLGHFEKPLF…VRVVQIIMVR (128 aa). 2 disordered regions span residues 343–427 and 441–463; these read FPSP…RSDF and QEGA…PREQ. S345 bears the Phosphoserine mark. Residues 350-367 show a composition bias toward polar residues; that stretch reads TRTSPVRGSKRMVSTSAT. Residue T352 is modified to Phosphothreonine. Residues S353 and S363 each carry the phosphoserine modification. Positions 375–389 are enriched in pro residues; the sequence is GRPPDPTGAPLPGPT. S411 carries the post-translational modification Phosphoserine. At T455 the chain carries Phosphothreonine. Residues 502–624 and 620–740 contribute to the a nucleoside 3',5'-cyclic phosphate site; these read ELAK…VAAR and TVAA…LSQK. In terms of domain architecture, PNPLA spans 971 to 1137; the sequence is LVLGGGGARG…INNLPADIAR (167 aa). A GXGXXG motif is present at residues 975–980; sequence GGGARG. A GXSXG motif is present at residues 1002 to 1006; sequence GTSIG. S1004 acts as the Nucleophile in catalysis. The active-site Proton acceptor is the D1124. Residues 1124–1126 carry the DGA/G motif; that stretch reads DGG. The interval 1296–1365 is disordered; sequence SYVSDGCADG…QEPPGSATDA (70 aa). Acidic residues predominate over residues 1303 to 1319; sequence ADGEESDCLTEYEEDAG.

The protein belongs to the NTE family. Glycosylated.

The protein localises to the endoplasmic reticulum membrane. The catalysed reaction is a 1-acyl-sn-glycero-3-phosphocholine + H2O = sn-glycerol 3-phosphocholine + a fatty acid + H(+). It carries out the reaction 1-hexadecanoyl-sn-glycero-3-phosphocholine + H2O = sn-glycerol 3-phosphocholine + hexadecanoate + H(+). It catalyses the reaction 1-(9Z-octadecenoyl)-sn-glycero-3-phosphocholine + H2O = sn-glycerol 3-phosphocholine + (9Z)-octadecenoate + H(+). The enzyme catalyses 1-hexadecanoylglycerol + H2O = glycerol + hexadecanoate + H(+). The catalysed reaction is 2-hexadecanoylglycerol + H2O = glycerol + hexadecanoate + H(+). It carries out the reaction 1-(9Z-octadecenoyl)-glycerol + H2O = glycerol + (9Z)-octadecenoate + H(+). It catalyses the reaction 2-(9Z-octadecenoyl)-glycerol + H2O = glycerol + (9Z)-octadecenoate + H(+). The enzyme catalyses 2-(5Z,8Z,11Z,14Z-eicosatetraenoyl)-glycerol + H2O = glycerol + (5Z,8Z,11Z,14Z)-eicosatetraenoate + H(+). The catalysed reaction is 1-hexadecanoyl-sn-glycero-3-phosphate + H2O = sn-glycerol 3-phosphate + hexadecanoate + H(+). Inhibited by a series a OPs such as mipafox (MPX), phenyl saligenin phosphate (PSP), phenyl dipentyl phosphinate (PDPP), diisopropyl fluorophosphate and paraoxon. Phospholipase B that deacylates intracellular phosphatidylcholine (PtdCho), generating glycerophosphocholine (GroPtdCho). This deacylation occurs at both sn-2 and sn-1 positions of PtdCho. Catalyzes the hydrolysis of several naturally occurring membrane-associated lipids. Hydrolyzes lysophospholipids and monoacylglycerols, preferring the 1-acyl to the 2-acyl isomer. Does not catalyze hydrolysis of di- or triacylglycerols or fatty acid amides. This is Patatin-like phospholipase domain-containing protein 6 (PNPLA6) from Pongo abelii (Sumatran orangutan).